We begin with the raw amino-acid sequence, 686 residues long: Eukaryotic translation initiation factor 3 subunit B (686 aa).

A disordered region spans residues 1–29 (MAKKHAGADANDSDYNEEPNFEDPPGFVD). Residues 11–21 (NDSDYNEEPNF) are compositionally biased toward acidic residues. One can recognise an RRM domain in the interval 53-137 (SVVVVDNIPK…HTFAVNLFTD (85 aa)). WD repeat units lie at residues 203-242 (TRER…KIQK), 289-327 (DGMS…LLDL), 330-365 (IKIP…TLME), 438-480 (EIRE…KPSL), and 526-571 (PDHF…IKRT). Positions 590–642 (AEEKQKEIKKNLKKYYAVFEQKDRLRLTRASKELLEKRAQLRETFMEYRNKRI) form a coiled coil.

This sequence belongs to the eIF-3 subunit B family. In terms of assembly, component of the eukaryotic translation initiation factor 3 (eIF-3) complex. The eIF-3 complex interacts with pix. Interacts with mxt.

The protein resides in the cytoplasm. In terms of biological role, RNA-binding component of the eukaryotic translation initiation factor 3 (eIF-3) complex, which is involved in protein synthesis of a specialized repertoire of mRNAs and, together with other initiation factors, stimulates binding of mRNA and methionyl-tRNAi to the 40S ribosome. The eIF-3 complex specifically targets and initiates translation of a subset of mRNAs involved in cell proliferation. The protein is Eukaryotic translation initiation factor 3 subunit B of Drosophila ananassae (Fruit fly).